Here is a 361-residue protein sequence, read N- to C-terminus: Glucose 1-dehydrogenase (361 aa).

Zn(2+) is bound at residue C41. T43 is a substrate binding site. Zn(2+)-binding residues include H68 and E69. Residues E119, E156, and N160 each contribute to the substrate site. E156 provides a ligand contact to Zn(2+). NADP(+) contacts are provided by residues 216–218 (NRH), 275–277 (FGT), 304–306 (SVD), and K349. D306 is a binding site for substrate.

This sequence belongs to the zinc-containing alcohol dehydrogenase family. Glucose 1-dehydrogenase subfamily. Homotetramer. Requires Zn(2+) as cofactor.

It carries out the reaction D-glucose + NAD(+) = D-glucono-1,5-lactone + NADH + H(+). The enzyme catalyses D-glucose + NADP(+) = D-glucono-1,5-lactone + NADPH + H(+). The catalysed reaction is D-galactose + NAD(+) = D-galactono-1,4-lactone + NADH + H(+). It catalyses the reaction D-galactose + NADP(+) = D-galactono-1,5-lactone + NADPH + H(+). Its function is as follows. Catalyzes the NAD(P)(+)-dependent oxidation of D-glucose to D-gluconate via gluconolactone. Is also significantly active with galactose as substrate, but not with mannose or glucose 6-phosphate. Can utilize both NAD(+) and NADP(+) as electron acceptor, with a marked preference for NADP(+). Physiologically, may be involved in the degradation of both glucose and galactose through a non-phosphorylative variant of the Entner-Doudoroff pathway. In Thermoplasma acidophilum (strain ATCC 25905 / DSM 1728 / JCM 9062 / NBRC 15155 / AMRC-C165), this protein is Glucose 1-dehydrogenase.